A 111-amino-acid chain; its full sequence is Large ribosomal subunit protein uL22 (111 aa).

It belongs to the universal ribosomal protein uL22 family. As to quaternary structure, part of the 50S ribosomal subunit.

Functionally, this protein binds specifically to 23S rRNA; its binding is stimulated by other ribosomal proteins, e.g. L4, L17, and L20. It is important during the early stages of 50S assembly. It makes multiple contacts with different domains of the 23S rRNA in the assembled 50S subunit and ribosome. Its function is as follows. The globular domain of the protein is located near the polypeptide exit tunnel on the outside of the subunit, while an extended beta-hairpin is found that lines the wall of the exit tunnel in the center of the 70S ribosome. The protein is Large ribosomal subunit protein uL22 of Clostridium kluyveri (strain NBRC 12016).